The primary structure comprises 382 residues: Succinate--CoA ligase [ADP-forming] subunit beta (382 aa).

In terms of domain architecture, ATP-grasp spans 9–240; that stretch reads KELFLRYGVK…PRDITEFEAY (232 aa). Residues Lys45, 52–54, Val94, and Glu99 contribute to the ATP site; that span reads GRG. The Mg(2+) site is built by Asn193 and Asp207. Residues Asn260 and 317-319 each bind substrate; that span reads GIT.

Belongs to the succinate/malate CoA ligase beta subunit family. As to quaternary structure, heterotetramer of two alpha and two beta subunits. Mg(2+) is required as a cofactor.

It carries out the reaction succinate + ATP + CoA = succinyl-CoA + ADP + phosphate. It catalyses the reaction GTP + succinate + CoA = succinyl-CoA + GDP + phosphate. It participates in carbohydrate metabolism; tricarboxylic acid cycle; succinate from succinyl-CoA (ligase route): step 1/1. In terms of biological role, succinyl-CoA synthetase functions in the citric acid cycle (TCA), coupling the hydrolysis of succinyl-CoA to the synthesis of either ATP or GTP and thus represents the only step of substrate-level phosphorylation in the TCA. The beta subunit provides nucleotide specificity of the enzyme and binds the substrate succinate, while the binding sites for coenzyme A and phosphate are found in the alpha subunit. The sequence is that of Succinate--CoA ligase [ADP-forming] subunit beta from Pyrobaculum islandicum (strain DSM 4184 / JCM 9189 / GEO3).